A 193-amino-acid chain; its full sequence is Cerebellin-1 (193 aa).

An N-terminal signal peptide occupies residues 1-21 (MLGVLELLLLGAAWLAGPARG). Residue N23 is glycosylated (N-linked (GlcNAc...) asparagine). The tract at residues 34-38 (CLVVC) is essential for interaction with NRXN1 and linker of two C1q trimers into disulfide-linked hexamers. A C1q domain is found at 57 to 193 (SGSAKVAFSA…TFSGFLVFPL (137 aa)). The interval 62 to 193 (VAFSAIRSTN…TFSGFLVFPL (132 aa)) is necessary for interaction with CBLN3, and homotrimerization. N-linked (GlcNAc...) asparagine glycosylation occurs at N79. Residues 122–147 (YNRQTIQVSLMLNGWPVISAFAGDQD) form an essential for interaction with GRID2 region.

As to quaternary structure, homohexamer; disulfide-linked homotrimers. The trimers associate via N-terminal cysteine residues to form disulfide-linked hexamers. May form oligomers with CBLN2, CBLN3 AND CBLN4 prior to secretion. Once secreted, does not interact with other CBLN family members. Interacts with GRID1. Interacts with NRXN1 and NRXN2 long (alpha) and short (beta) isoforms produced by alternative promoter usage. Competes with NLGN1 for NRXN1-binding. Weakly interacts with NRXN3 short isoform and not at all with NRXN3 long isoform. Interacts (via C1q domain) with GRID2; GRID2-binding is calcium-independent; CBLN1 hexamers anchor GRID2 N-terminal domain dimers to monomeric NRXN1 isoform beta; promotes synaptogenesis and mediates the D-Serine-dependent long term depression signals and AMPA receptor endocytosis. Interacts with OTOL1. In terms of processing, the proteolytic processing to yield cerebellin seems to occur either prior to the secretion by presynaptic neurons and subsequent oligomerization or in some other location after release of the mature protein. Sialoglycoprotein. In the Purkinje cells postsynaptic structures. In the cerebellum, cerebellin is much less abundant than [des-Ser1]-cerebellin.

Its subcellular location is the secreted. The protein localises to the postsynaptic cell membrane. Its function is as follows. Required for synapse integrity and synaptic plasticity. During cerebellar synapse formation, essential for the matching and maintenance of pre- and post-synaptic elements at parallel fiber-Purkinje cell synapses, the establishment of the proper pattern of climbing fiber-Purkinje cell innervation, and induction of long-term depression at parallel fiber-Purkinje cell synapses. Plays a role as a synaptic organizer that acts bidirectionally on both pre- and post-synaptic components. On the one hand induces accumulation of synaptic vesicles in the pre-synaptic part by binding with NRXN1 and in other hand induces clustering of GRID2 and its associated proteins at the post-synaptic site through association of GRID2. NRXN1-CBLN1-GRID2 complex directly induces parallel fiber protrusions that encapsulate spines of Purkinje cells leading to accumulation of GRID2 and synaptic vesicles. Required for CBLN3 export from the endoplasmic reticulum and secretion. NRXN1-CBLN1-GRID2 complex mediates the D-Serine-dependent long term depression signals and AMPA receptor endocytosis. Essential for long-term maintenance but not establishment of excitatory synapses. Inhibits the formation and function of inhibitory GABAergic synapses in cerebellar Purkinje cells. The cerebellin peptide exerts neuromodulatory functions. Directly stimulates norepinephrine release via the adenylate cyclase/PKA-dependent signaling pathway; and indirectly enhances adrenocortical secretion in vivo, through a paracrine mechanism involving medullary catecholamine release. This is Cerebellin-1 (CBLN1) from Homo sapiens (Human).